We begin with the raw amino-acid sequence, 285 residues long: Chemotaxis protein LafT (285 aa).

Helical transmembrane passes span 4–23 (FLGV…WAGG), 34–51 (FLII…GNPP), 171–191 (ALPG…MQAI), and 201–222 (HVAA…GLDP). Over 223 to 285 (LSNAMAQRVK…MEKWLAEQEG (63 aa)) the chain is Cytoplasmic.

It belongs to the MotA family.

It is found in the cell inner membrane. Functionally, required for rotation of the flagellar motor. Probable transmembrane proton channel. The protein is Chemotaxis protein LafT (lafT) of Vibrio parahaemolyticus serotype O3:K6 (strain RIMD 2210633).